A 132-amino-acid polypeptide reads, in one-letter code: Small ribosomal subunit protein uS8 (132 aa).

The protein belongs to the universal ribosomal protein uS8 family. In terms of assembly, part of the 30S ribosomal subunit. Contacts proteins S5 and S12.

One of the primary rRNA binding proteins, it binds directly to 16S rRNA central domain where it helps coordinate assembly of the platform of the 30S subunit. The sequence is that of Small ribosomal subunit protein uS8 from Mycobacterium leprae (strain Br4923).